The chain runs to 504 residues: Peroxisomal N(1)-acetyl-spermine/spermidine oxidase (504 aa).

FAD-binding positions include Ala-16, Glu-37, Arg-45, and 61–62 (HW). Substrate-binding residues include His-64 and Val-187. FAD is bound at residue Val-240. Asn-313 provides a ligand contact to substrate. Residues Glu-465 and 474-475 (TT) each bind FAD. Residues 502 to 504 (PRL) carry the Microbody targeting signal motif.

This sequence belongs to the flavin monoamine oxidase family. Monomer. It depends on FAD as a cofactor. In terms of tissue distribution, widely expressed at different developmental stages. Expressed at high level in the liver and the stomach, expressed at lower level in heart, spleen, thymus, small intestine, muscle, pancreas, uterus, and breast and expressed at very low level in brain, kidney, lung, testis, skin, adrenal gland and prostate gland.

The protein localises to the peroxisome. It is found in the cytoplasm. It catalyses the reaction N(1)-acetylspermine + O2 + H2O = 3-acetamidopropanal + spermidine + H2O2. The catalysed reaction is N(1)-acetylspermidine + O2 + H2O = 3-acetamidopropanal + putrescine + H2O2. The enzyme catalyses N(1),N(12)-diacetylspermine + O2 + H2O = 3-acetamidopropanal + N(1)-acetylspermidine + H2O2. Its pathway is amine and polyamine metabolism; spermine metabolism. Its function is as follows. Flavoenzyme which catalyzes the oxidation of N(1)-acetylspermine to spermidine and is thus involved in the polyamine back-conversion. Can also oxidize N(1)-acetylspermidine to putrescine. Substrate specificity: N(1)-acetylspermine = N(1)-acetylspermidine &gt; N(1),N(12)-diacylspermine &gt;&gt; spermine. Does not oxidize spermidine. Plays an important role in the regulation of polyamine intracellular concentration and has the potential to act as a determinant of cellular sensitivity to the antitumor polyamine analogs. In Mus musculus (Mouse), this protein is Peroxisomal N(1)-acetyl-spermine/spermidine oxidase (Paox).